Consider the following 517-residue polypeptide: Protein NETWORKED 4B (517 aa).

2 disordered regions span residues 1–29 and 101–159; these read MASS…DSHN and LQKN…EDGD. Residues 10-21 show a composition bias toward basic residues; sequence KQFKRSMTKKSH. An NAB domain is found at 21–101; that stretch reads HSWWWDSHNC…ERYDQASGEL (81 aa). Over residues 107 to 119 the composition is skewed to low complexity; that stretch reads SEIQSQSSLEISS. Residues 121-135 show a composition bias toward basic and acidic residues; the sequence is TKEKLSRRQSSHKEE. The stretch at 156 to 486 forms a coiled coil; sequence EDGDEALIRR…EQKREAIRQL (331 aa).

The protein belongs to the NET family.

Plant-specific actin binding protein. May be part of a membrane-cytoskeletal adapter complex. The sequence is that of Protein NETWORKED 4B from Arabidopsis thaliana (Mouse-ear cress).